The chain runs to 240 residues: MALLLSQPHFSGPLLLLVVSNLLLWEKAASNLPCVAEEGGCWNPLLETFNSATQKAETLHNLADQLYVELYYNQFSSGQFWDFSSQIIRQDKTVVRAGSYCHSSLTNPPNTGVHINIEIASYLKTLINFVGSWISPLFHLVIELSATKDVPETILSKAKEIEENNRQILSDLRWILTKVSPAAEMTEEFPHWEYLSFLKSSDKNNKFLAMFNLSYCIDHDSKYILLQLRLLKCLITGKDC.

An N-terminal signal peptide occupies residues 1-30 (MALLLSQPHFSGPLLLLVVSNLLLWEKAAS). 3 disulfides stabilise this stretch: Cys-34–Cys-41, Cys-101–Cys-216, and Cys-233–Cys-240. A glycan (N-linked (GlcNAc...) asparagine) is linked at Asn-212.

Belongs to the somatotropin/prolactin family. In terms of tissue distribution, expressed specifically in the spongiotrophoblast and trophoblast giant cells from the junctional zone of the chorioallantoic placenta.

The protein resides in the secreted. The protein is Prolactin-8A6 (Prl8a6) of Mus musculus (Mouse).